The following is a 360-amino-acid chain: A-type ATP synthase subunit C (360 aa).

This sequence belongs to the V-ATPase V0D/AC39 subunit family. Has multiple subunits, A(3), B(3), C, D, E, F, G, I and K(x); there may be a few other subunits as well.

It localises to the cell membrane. Functionally, component of the A-type ATP synthase that produces ATP from ADP in the presence of a proton gradient across the membrane. This chain is A-type ATP synthase subunit C, found in Methanosarcina mazei (strain ATCC BAA-159 / DSM 3647 / Goe1 / Go1 / JCM 11833 / OCM 88) (Methanosarcina frisia).